The sequence spans 296 residues: Peroxidase P7 (296 aa).

Q1 carries the post-translational modification Pyrrolidone carboxylic acid. 4 disulfides stabilise this stretch: C11–C91, C44–C49, C97–C292, and C176–C201. H42 functions as the Proton acceptor in the catalytic mechanism. Ca(2+) contacts are provided by D43, V46, G48, D50, and S52. P139 contacts substrate. H169 lines the heme b pocket. T170 lines the Ca(2+) pocket. A glycan (N-linked (GlcNAc...) asparagine) is linked at N185. 3 residues coordinate Ca(2+): D216, S219, and D224.

This sequence belongs to the peroxidase family. Classical plant (class III) peroxidase subfamily. Requires Ca(2+) as cofactor. Heme b is required as a cofactor.

It catalyses the reaction 2 a phenolic donor + H2O2 = 2 a phenolic radical donor + 2 H2O. Functionally, removal of H(2)O(2), oxidation of toxic reductants, biosynthesis and degradation of lignin, suberization, auxin catabolism, response to environmental stresses such as wounding, pathogen attack and oxidative stress. These functions might be dependent on each isozyme/isoform in each plant tissue. The sequence is that of Peroxidase P7 from Brassica rapa subsp. rapa (Turnip).